The primary structure comprises 372 residues: Glutamate 5-kinase (372 aa).

Lysine 14 is a binding site for ATP. Substrate-binding residues include serine 54, aspartate 141, and asparagine 153. ATP is bound by residues threonine 173–aspartate 174 and threonine 215–lysine 221. The PUA domain occupies alanine 280–isoleucine 358.

The protein belongs to the glutamate 5-kinase family.

Its subcellular location is the cytoplasm. The enzyme catalyses L-glutamate + ATP = L-glutamyl 5-phosphate + ADP. The protein operates within amino-acid biosynthesis; L-proline biosynthesis; L-glutamate 5-semialdehyde from L-glutamate: step 1/2. Its function is as follows. Catalyzes the transfer of a phosphate group to glutamate to form L-glutamate 5-phosphate. This Chromobacterium violaceum (strain ATCC 12472 / DSM 30191 / JCM 1249 / CCUG 213 / NBRC 12614 / NCIMB 9131 / NCTC 9757 / MK) protein is Glutamate 5-kinase.